The following is a 381-amino-acid chain: Alkanesulfonate monooxygenase (381 aa).

This sequence belongs to the SsuD family. As to quaternary structure, homotetramer.

The catalysed reaction is an alkanesulfonate + FMNH2 + O2 = an aldehyde + FMN + sulfite + H2O + 2 H(+). Functionally, catalyzes the desulfonation of aliphatic sulfonates. This Escherichia coli (strain SMS-3-5 / SECEC) protein is Alkanesulfonate monooxygenase.